The chain runs to 163 residues: NADH-quinone oxidoreductase subunit I (163 aa).

4Fe-4S ferredoxin-type domains lie at 54-84 (LRRY…IDSA) and 94-123 (TRYD…ETHI). Residues Cys-64, Cys-67, Cys-70, Cys-74, Cys-103, Cys-106, Cys-109, and Cys-113 each contribute to the [4Fe-4S] cluster site.

Belongs to the complex I 23 kDa subunit family. As to quaternary structure, NDH-1 is composed of 14 different subunits. Subunits NuoA, H, J, K, L, M, N constitute the membrane sector of the complex. Requires [4Fe-4S] cluster as cofactor.

It localises to the cell inner membrane. The catalysed reaction is a quinone + NADH + 5 H(+)(in) = a quinol + NAD(+) + 4 H(+)(out). Its function is as follows. NDH-1 shuttles electrons from NADH, via FMN and iron-sulfur (Fe-S) centers, to quinones in the respiratory chain. The immediate electron acceptor for the enzyme in this species is believed to be ubiquinone. Couples the redox reaction to proton translocation (for every two electrons transferred, four hydrogen ions are translocated across the cytoplasmic membrane), and thus conserves the redox energy in a proton gradient. This chain is NADH-quinone oxidoreductase subunit I, found in Xanthomonas oryzae pv. oryzae (strain KACC10331 / KXO85).